The chain runs to 473 residues: Trehalose-6-phosphate synthase (473 aa).

Arg10 contributes to the D-glucose 6-phosphate binding site. 21–22 (GG) provides a ligand contact to UDP-alpha-D-glucose. 2 residues coordinate D-glucose 6-phosphate: Tyr76 and Asp130. Residues Arg262 and Lys267 each coordinate UDP-alpha-D-glucose. Arg300 serves as a coordination point for D-glucose 6-phosphate. Residues Phe339 and 365-369 (LVAKE) contribute to the UDP-alpha-D-glucose site.

This sequence belongs to the glycosyltransferase 20 family. In terms of assembly, homotetramer.

It carries out the reaction D-glucose 6-phosphate + UDP-alpha-D-glucose = alpha,alpha-trehalose 6-phosphate + UDP + H(+). Its pathway is glycan biosynthesis; trehalose biosynthesis. In terms of biological role, probably involved in the osmoprotection via the biosynthesis of trehalose. Catalyzes the transfer of glucose from UDP-alpha-D-glucose (UDP-Glc) to D-glucose 6-phosphate (Glc-6-P) to form trehalose-6-phosphate. Acts with retention of the anomeric configuration of the UDP-sugar donor. The sequence is that of Trehalose-6-phosphate synthase from Citrobacter koseri (strain ATCC BAA-895 / CDC 4225-83 / SGSC4696).